Consider the following 229-residue polypeptide: Putative N-acetylmannosamine-6-phosphate 2-epimerase (229 aa).

This sequence belongs to the NanE family.

It carries out the reaction an N-acyl-D-glucosamine 6-phosphate = an N-acyl-D-mannosamine 6-phosphate. It functions in the pathway amino-sugar metabolism; N-acetylneuraminate degradation; D-fructose 6-phosphate from N-acetylneuraminate: step 3/5. Converts N-acetylmannosamine-6-phosphate (ManNAc-6-P) to N-acetylglucosamine-6-phosphate (GlcNAc-6-P). This Escherichia coli O7:K1 (strain IAI39 / ExPEC) protein is Putative N-acetylmannosamine-6-phosphate 2-epimerase.